A 670-amino-acid polypeptide reads, in one-letter code: Leucine zipper putative tumor suppressor 2 (670 aa).

Disordered stretches follow at residues 1–52 (MAIV…GVPG), 92–131 (NEDF…IPVS), and 150–323 (PVLP…PSDE). The required for centrosomal localization stretch occupies residues 1-333 (MAIVQTLPVP…ALLHCVLEGK (333 aa)). Over residues 187–199 (ASSSSSSSSSSAA) the composition is skewed to low complexity. Polar residues predominate over residues 213 to 233 (PSGTLSDSGRNSLSSLPTYST). Composition is skewed to low complexity over residues 242-251 (SPGGHLPSHG) and 260-310 (PARG…GGDR). Serine 249 and serine 296 each carry phosphoserine. Pro residues predominate over residues 311–321 (SPPPPPPPPPS). Residues 329-650 (VLEGKLRDRE…LELEARELAD (322 aa)) are a coiled coil. Residues 448-670 (SGEISLLKQQ…CLEEITATEI (223 aa)) are sufficient for interaction with CTNNB1. The interval 451–670 (ISLLKQQLKE…CLEEITATEI (220 aa)) is sufficient for interaction with KATNB1 and for inhibition of katanin-mediated microtubule severing. Serine 571 carries the post-translational modification Phosphoserine. Positions 632–641 (LEQELQQLSL) match the Nuclear export signal motif.

This sequence belongs to the LZTS2 family. Interacts with CTNNB1. Interacts with KATNB1. Also interacts with gamma-tubulin and KIF23.

It localises to the cytoplasm. It is found in the cytoskeleton. The protein resides in the microtubule organizing center. The protein localises to the centrosome. Its function is as follows. Negative regulator of katanin-mediated microtubule severing and release from the centrosome. Required for central spindle formation and the completion of cytokinesis. May negatively regulate axonal outgrowth by preventing the formation of microtubule bundles that are necessary for transport within the elongating axon. Negative regulator of the Wnt signaling pathway. Represses beta-catenin-mediated transcriptional activation by promoting the nuclear exclusion of beta-catenin. The polypeptide is Leucine zipper putative tumor suppressor 2 (Lzts2) (Rattus norvegicus (Rat)).